Consider the following 105-residue polypeptide: Signal peptidase complex subunit 1 (105 aa).

The Cytoplasmic portion of the chain corresponds to 1–32 (MDGMIAMLPAPLQKLSSHIDFQGQKVAERTYQ). A helical membrane pass occupies residues 33 to 53 (VILTIAGIIGFLVGFWTQQLS). Topologically, residues 54–56 (YAM) are lumenal. The helical transmembrane segment at 57 to 77 (FTVLGASAFTALIILPPWPFL) threads the bilayer. Topologically, residues 78 to 105 (FRKNPIVWHTPAEPQESGDKKKETKKTK) are cytoplasmic.

This sequence belongs to the SPCS1 family. Component of the signal peptidase complex (SPC) composed of a catalytic subunit sec-11 and three accessory subunits spcs-1, spcs-2 and spcs-3. The complex induces a local thinning of the ER membrane which is used to measure the length of the signal peptide (SP) h-region of protein substrates. This ensures the selectivity of the complex towards h-regions shorter than 18-20 amino acids.

Its subcellular location is the endoplasmic reticulum membrane. Functionally, component of the signal peptidase complex (SPC) which catalyzes the cleavage of N-terminal signal sequences from nascent proteins as they are translocated into the lumen of the endoplasmic reticulum. Dispensable for SPC enzymatic activity. This chain is Signal peptidase complex subunit 1, found in Caenorhabditis elegans.